The primary structure comprises 34 residues: Omega/M-ectatotoxin-Et1a subunit B (34 aa).

Cysteines 10 and 32 form a disulfide.

Belongs to the ectatomin family. Ectatomin-Et subfamily. Heterodimer of an A and a B chain; disulfide-linked. As to expression, expressed by the venom gland.

The protein localises to the secreted. Its subcellular location is the target cell membrane. Algogenic for animals, human and insects. At high concentrations (0.5-1 uM), it acts as a pore-forming protein that forms nonselective cation channels both in cell and artificial membranes. It is weakly selective for cation over anions channel conductance is identical in both directions. At lower concentrations (1-10 nM), this heterodimer inhibits cardiac L-type calcium currents in isolated rat cardiac ventricular myocytes. This is Omega/M-ectatotoxin-Et1a subunit B from Ectatomma tuberculatum (Selva ant).